The chain runs to 102 residues: Iron-sulfur cluster assembly protein CyaY (102 aa).

The protein belongs to the frataxin family.

In terms of biological role, involved in iron-sulfur (Fe-S) cluster assembly. May act as a regulator of Fe-S biogenesis. The sequence is that of Iron-sulfur cluster assembly protein CyaY from Histophilus somni (strain 2336) (Haemophilus somnus).